The sequence spans 470 residues: Calcium/manganese antiporter SLC30A10 (470 aa).

At 1-10 the chain is on the cytoplasmic side; sequence MGRYSGKTCR. The helical transmembrane segment at 11 to 31 threads the bilayer; that stretch reads LLFMLVLTAAFFVAELVSGYL. Over 32-34 the chain is Extracellular; that stretch reads GNS. The helical transmembrane segment at 35 to 55 threads the bilayer; the sequence is IALLSDSFNMLSDLISLCVGL. Topologically, residues 56-81 are cytoplasmic; that stretch reads GSGYIARRGPRGSSATYGYVRAEVVG. The chain crosses the membrane as a helical span at residues 82–102; sequence ALSNAVFLTALCFTIFVEAVL. Residues 103–113 lie on the Extracellular side of the membrane; it reads RLARPERIDDP. Residues 114–134 form a helical membrane-spanning segment; it reads ELVLIVGALGLAVNVVGLLIF. Residues 135–233 lie on the Cytoplasmic side of the membrane; that stretch reads QDCGACFSRC…KSEALNIRGV (99 aa). Residues 146–223 are disordered; the sequence is RGRRTRPSQQ…EPEETTKKEK (78 aa). Over residues 171-184 the composition is skewed to low complexity; that stretch reads AATATAPGSGTAVT. The chain crosses the membrane as a helical span at residues 234–254; the sequence is LLHVMGDALGSVVVVITAIIF. Residues 255 to 270 are Extracellular-facing; the sequence is YVQPLRREDPCNWQCY. The chain crosses the membrane as a helical span at residues 271-291; it reads IDPSLTVVMVIIILSSAFPLI. Over 292–470 the chain is Cytoplasmic; the sequence is KETAVILLQM…RQHYENSTHF (179 aa). The segment at 300–470 is required for plasma membrane localization; it reads QMVPKGVNME…RQHYENSTHF (171 aa). The interval 451-470 is disordered; that stretch reads QGQTLSKTQERQHYENSTHF. A compositionally biased stretch (basic and acidic residues) spans 458-470; that stretch reads TQERQHYENSTHF.

The protein belongs to the cation diffusion facilitator (CDF) transporter (TC 2.A.4) family. SLC30A subfamily. In terms of assembly, forms homodimers. Forms heterodimers and high-molecular weight oligomers with SLC30A3, SLC30A2 and SLC30A4; heterodimerization is mediated by covalent-bound tyrosine residues, occurs probably in a tissue-specific manner and could mediate the intracellular zinc transport activity into early endosomes and recycling endosomes. Specifically expressed in fetal liver and fetal brain.

Its subcellular location is the cell membrane. The protein localises to the golgi apparatus membrane. It localises to the recycling endosome membrane. It is found in the early endosome membrane. It catalyses the reaction Mn(2+)(out) + Ca(2+)(in) = Mn(2+)(in) + Ca(2+)(out). The catalysed reaction is Zn(2+)(in) = Zn(2+)(out). In terms of biological role, calcium:manganese antiporter of the plasma membrane mediating the efflux of intracellular manganese coupled to an active extracellular calcium exchange. Required for intracellular manganese homeostasis, an essential cation for the function of several enzymes, including some crucially important for the metabolism of neurotransmitters and other neuronal metabolic pathways. Manganese can also be cytotoxic and induce oxidative stress, mitochondrial dysfunction and apoptosis. Could also have an intracellular zinc ion transporter activity, directly regulating intracellular zinc ion homeostasis and more indirectly various signaling pathway and biological processes. The protein is Calcium/manganese antiporter SLC30A10 of Mus musculus (Mouse).